The chain runs to 338 residues: Malate dehydrogenase, mitochondrial (338 aa).

A mitochondrion-targeting transit peptide spans 1–24 (MLSALARPVGAALRRSFSTSAQNN). Residues 31–37 (GASGGIG) and D57 contribute to the NAD(+) site. S33 is a glycosylation site (O-linked (GlcNAc) serine). Residues K78 and K91 each carry the N6-acetyllysine; alternate modification. 2 positions are modified to N6-succinyllysine; alternate: K78 and K91. 2 residues coordinate substrate: R104 and R110. NAD(+)-binding positions include N117 and 140 to 142 (ISN). Substrate is bound at residue N142. K165 is modified (N6-acetyllysine). A substrate-binding site is contributed by R176. K185 carries the N6-acetyllysine; alternate modification. K185 is modified (N6-succinyllysine; alternate). Catalysis depends on H200, which acts as the Proton acceptor. K203 bears the N6-succinyllysine mark. N6-acetyllysine; alternate occurs at positions 215 and 239. Residues K215 and K239 each carry the N6-succinyllysine; alternate modification. K239 is subject to N6-malonyllysine; alternate. S246 is subject to Phosphoserine. NAD(+) is bound at residue M251. K269 is modified (N6-succinyllysine). 5 positions are modified to N6-acetyllysine; alternate: K296, K301, K307, K314, and K324. N6-succinyllysine; alternate occurs at positions 296, 301, 307, 314, and 324. K307 is subject to N6-malonyllysine; alternate. Position 326 is a phosphoserine (S326). 3 positions are modified to N6-acetyllysine; alternate: K328, K329, and K335. K328 is modified (N6-succinyllysine; alternate). The residue at position 329 (K329) is an N6-malonyllysine; alternate. Residue K335 is modified to N6-succinyllysine; alternate.

This sequence belongs to the LDH/MDH superfamily. MDH type 1 family. In terms of assembly, homodimer. In terms of processing, acetylation is enhanced after treatment either with trichostin A (TCA) or with nicotinamide (NAM) with the appearance of tri- and tetraacetylations. Glucose also increases acetylation. In terms of tissue distribution, expressed in flagella of epididymal sperm.

It is found in the mitochondrion matrix. The catalysed reaction is (S)-malate + NAD(+) = oxaloacetate + NADH + H(+). Enzyme activity is enhanced by acetylation. This Rattus norvegicus (Rat) protein is Malate dehydrogenase, mitochondrial (Mdh2).